Here is a 173-residue protein sequence, read N- to C-terminus: Archaemetzincin (173 aa).

His130 is a Zn(2+) binding site. Glu131 functions as the Proton acceptor in the catalytic mechanism. The Zn(2+) site is built by His134, His140, Cys141, Cys146, Cys165, and Cys168.

This sequence belongs to the peptidase M54 family. Monomer. Requires Zn(2+) as cofactor.

In terms of biological role, probable zinc metalloprotease whose natural substrate is unknown. In Haloquadratum walsbyi (strain DSM 16790 / HBSQ001), this protein is Archaemetzincin.